The primary structure comprises 415 residues: Gamma-glutamyl phosphate reductase (415 aa).

The protein belongs to the gamma-glutamyl phosphate reductase family.

The protein localises to the cytoplasm. The enzyme catalyses L-glutamate 5-semialdehyde + phosphate + NADP(+) = L-glutamyl 5-phosphate + NADPH + H(+). It participates in amino-acid biosynthesis; L-proline biosynthesis; L-glutamate 5-semialdehyde from L-glutamate: step 2/2. In terms of biological role, catalyzes the NADPH-dependent reduction of L-glutamate 5-phosphate into L-glutamate 5-semialdehyde and phosphate. The product spontaneously undergoes cyclization to form 1-pyrroline-5-carboxylate. The sequence is that of Gamma-glutamyl phosphate reductase from Oceanobacillus iheyensis (strain DSM 14371 / CIP 107618 / JCM 11309 / KCTC 3954 / HTE831).